The sequence spans 437 residues: Epsilon-sarcoglycan (437 aa).

Topologically, residues 1 to 317 (MQLPRWWELG…LKSRDYYTDF (317 aa)) are extracellular. A glycan (N-linked (GlcNAc...) asparagine) is linked at Asn-200. The helical transmembrane segment at 318-338 (LITLAVPSAVALVLFLILAYI) threads the bilayer. The Cytoplasmic segment spans residues 339–437 (MCCRREGVEK…QQQTTGKWYP (99 aa)).

It belongs to the sarcoglycan alpha/epsilon family. N-glycosylated. Post-translationally, ubiquitinated, leading to its degradation by the proteasome.

It localises to the cell membrane. Its subcellular location is the sarcolemma. The protein localises to the cytoplasm. It is found in the cytoskeleton. The protein resides in the cell projection. It localises to the dendrite. Its subcellular location is the golgi apparatus. In terms of biological role, component of the sarcoglycan complex, a subcomplex of the dystrophin-glycoprotein complex which forms a link between the F-actin cytoskeleton and the extracellular matrix. In Pongo abelii (Sumatran orangutan), this protein is Epsilon-sarcoglycan.